A 465-amino-acid polypeptide reads, in one-letter code: Cysteine--tRNA ligase (465 aa).

Cys29 is a Zn(2+) binding site. The 'HIGH' region motif lies at 31 to 41 (PTVYNYIHIGN). 3 residues coordinate Zn(2+): Cys209, His234, and Glu238. Residues 266–270 (KMSKS) carry the 'KMSKS' region motif. Lys269 contacts ATP. The residue at position 270 (Ser270) is a Phosphoserine.

It belongs to the class-I aminoacyl-tRNA synthetase family. Monomer. Requires Zn(2+) as cofactor.

It localises to the cytoplasm. The enzyme catalyses tRNA(Cys) + L-cysteine + ATP = L-cysteinyl-tRNA(Cys) + AMP + diphosphate. This chain is Cysteine--tRNA ligase, found in Bacillus cereus (strain 03BB102).